Reading from the N-terminus, the 294-residue chain is Pyridoxal 5'-phosphate synthase subunit PdxS (294 aa).

Aspartate 24 is a binding site for D-ribose 5-phosphate. Residue lysine 81 is the Schiff-base intermediate with D-ribose 5-phosphate of the active site. Glycine 153 lines the D-ribose 5-phosphate pocket. A D-glyceraldehyde 3-phosphate-binding site is contributed by arginine 165. Residues glycine 214 and 235-236 each bind D-ribose 5-phosphate; that span reads GS.

Belongs to the PdxS/SNZ family. In terms of assembly, homohexamer and homododecamer. In the presence of PdxT, forms a dodecamer of heterodimers.

It catalyses the reaction aldehydo-D-ribose 5-phosphate + D-glyceraldehyde 3-phosphate + L-glutamine = pyridoxal 5'-phosphate + L-glutamate + phosphate + 3 H2O + H(+). It participates in cofactor biosynthesis; pyridoxal 5'-phosphate biosynthesis. Functionally, catalyzes the formation of pyridoxal 5'-phosphate from ribose 5-phosphate (RBP), glyceraldehyde 3-phosphate (G3P) and ammonia. The ammonia is provided by the PdxT subunit. Can also use ribulose 5-phosphate and dihydroxyacetone phosphate as substrates, resulting from enzyme-catalyzed isomerization of RBP and G3P, respectively. The chain is Pyridoxal 5'-phosphate synthase subunit PdxS from Bacillus subtilis (strain 168).